Consider the following 983-residue polypeptide: Probable beta-galactosidase C (983 aa).

Residues M1–G23 form the signal peptide. Substrate contacts are provided by Y82, N127, A128, E129, and N187. E188 acts as the Proton donor in catalysis. An N-linked (GlcNAc...) asparagine glycan is attached at N197. Y251 contacts substrate. C257 and C304 are disulfide-bonded. An N-linked (GlcNAc...) asparagine glycan is attached at N276. Residue E287 is the Nucleophile of the active site. Y353 is a substrate binding site. N-linked (GlcNAc...) asparagine glycans are attached at residues N391, N434, N466, N516, N601, N676, N714, N719, N758, and N804.

Belongs to the glycosyl hydrolase 35 family.

The protein localises to the secreted. It catalyses the reaction Hydrolysis of terminal non-reducing beta-D-galactose residues in beta-D-galactosides.. Its function is as follows. Cleaves beta-linked terminal galactosyl residues from gangliosides, glycoproteins, and glycosaminoglycans. This is Probable beta-galactosidase C (lacC) from Aspergillus fumigatus (strain CBS 144.89 / FGSC A1163 / CEA10) (Neosartorya fumigata).